The chain runs to 415 residues: Imidazolonepropionase (415 aa).

Fe(3+) contacts are provided by His83 and His85. The Zn(2+) site is built by His83 and His85. Arg92, Tyr155, and His188 together coordinate 4-imidazolone-5-propanoate. Tyr155 serves as a coordination point for N-formimidoyl-L-glutamate. Fe(3+) is bound at residue His250. His250 serves as a coordination point for Zn(2+). Gln253 provides a ligand contact to 4-imidazolone-5-propanoate. Position 324 (Asp324) interacts with Fe(3+). Residue Asp324 participates in Zn(2+) binding. 2 residues coordinate N-formimidoyl-L-glutamate: Asn326 and Gly328. Residue Ser329 participates in 4-imidazolone-5-propanoate binding.

The protein belongs to the metallo-dependent hydrolases superfamily. HutI family. The cofactor is Zn(2+). It depends on Fe(3+) as a cofactor.

It localises to the cytoplasm. The catalysed reaction is 4-imidazolone-5-propanoate + H2O = N-formimidoyl-L-glutamate. It participates in amino-acid degradation; L-histidine degradation into L-glutamate; N-formimidoyl-L-glutamate from L-histidine: step 3/3. Catalyzes the hydrolytic cleavage of the carbon-nitrogen bond in imidazolone-5-propanoate to yield N-formimidoyl-L-glutamate. It is the third step in the universal histidine degradation pathway. In Rubrobacter xylanophilus (strain DSM 9941 / JCM 11954 / NBRC 16129 / PRD-1), this protein is Imidazolonepropionase.